The sequence spans 130 residues: Small ribosomal subunit protein uS8 (130 aa).

The protein belongs to the universal ribosomal protein uS8 family. In terms of assembly, part of the 30S ribosomal subunit. Contacts proteins S5 and S12.

Its function is as follows. One of the primary rRNA binding proteins, it binds directly to 16S rRNA central domain where it helps coordinate assembly of the platform of the 30S subunit. The sequence is that of Small ribosomal subunit protein uS8 from Histophilus somni (strain 129Pt) (Haemophilus somnus).